The following is a 152-amino-acid chain: Immunity protein YobK (152 aa).

Interacts with cognate toxin YobL but not with non-cognate putative toxin YeeF. The interaction inhibits the toxic activity of YobL.

The protein localises to the cytoplasm. In terms of biological role, immunity component of one of 6 LXG toxin-immunity modules in this strain. They promote kin selection, mediate competition in biofilms, and drive spatial segregation of different strains, indicating that LXG toxins may help avoid warfare between strains in biofilms. Mediates intercellular competition during biofilm formation; disruption of the operon disadvantages the bacteria, but overexpression of the cognate immunity protein restores growth in competition with wild-type. In situ neutralizes the toxic effect of cognate toxin YobL. Neutralizes the toxic activity of cognate toxin YobL upon expression in E.coli. Does not have immunity protein activity on other LXG toxins. This Bacillus subtilis (strain 168) protein is Immunity protein YobK (yobK).